Reading from the N-terminus, the 308-residue chain is Methionyl-tRNA formyltransferase (308 aa).

Residue 109 to 112 (SLLP) participates in (6S)-5,6,7,8-tetrahydrofolate binding.

This sequence belongs to the Fmt family.

It carries out the reaction L-methionyl-tRNA(fMet) + (6R)-10-formyltetrahydrofolate = N-formyl-L-methionyl-tRNA(fMet) + (6S)-5,6,7,8-tetrahydrofolate + H(+). Functionally, attaches a formyl group to the free amino group of methionyl-tRNA(fMet). The formyl group appears to play a dual role in the initiator identity of N-formylmethionyl-tRNA by promoting its recognition by IF2 and preventing the misappropriation of this tRNA by the elongation apparatus. This is Methionyl-tRNA formyltransferase from Caulobacter vibrioides (strain NA1000 / CB15N) (Caulobacter crescentus).